A 105-amino-acid chain; its full sequence is POU domain, class 3, transcription factor 3 (105 aa).

One can recognise a POU-specific domain in the interval 1 to 49 (QADVGLALGTLYGNVFSQTTICRFEALQLSFKNMCKLKPLLNKWLEEAD). The homeobox DNA-binding region spans 67–105 (KRKKRTSIEVSVKGALESHFLKCPKPAAQEITTLADSLQ).

Belongs to the POU transcription factor family. Class-3 subfamily.

It localises to the nucleus. The chain is POU domain, class 3, transcription factor 3 (pou3f3) from Xenopus laevis (African clawed frog).